Consider the following 609-residue polypeptide: MSNEFNAQSFLRTVSSSAGVYRMYDVKNDVIYVGKAKDLKKRLTSYFRKNLANVKTQALVSHIHHIDVTLTHSETDALLLENDYIKQYMPKYNVLLRDDKSYPYILLSQHEHPRLAYHRGPQREKGHYFGPYPNGGAVRESLHLMQKLFPIRQCDDLYYKSRSRPCLQYQLSRCSAPCVGKVSNADYDEQVKLASLFLKGKDQQVISALVDKMELAAERQAYEQAARFRDQIMALRKVAEQQEVSNNKGDMDVIGVHYSSGIACFHLLFIREGKIFGSRSYYPSVPAQTDMDEVLRSFILQFYLNADIQRTIPKEVVISHNFEELHELEAAVSEALDKKFSIKTNVRADRASFLRLAVTNATNAVVTRLSHKNTVEQRFVLLEEILELSTPIQRMECFDISHTMGESTVASCVVFNREGPHKGEYRRYNIEGITPGDDYAAMKQAVSRRFDKIEAGGKIPDILFIDGGLGQLRIAQKIVDEKFVHLDKAPQLIGVAKGEGRKPGLETLILGDTETSFSLEGDSPALHLIQHIRDESHRFAITGHRNRRQKTRNTSTLESIPGIGPKRRKALLQHLGGLQEVKGASVAELVKVPGISIEMAQTIHDALRG.

Positions 16 to 94 constitute a GIY-YIG domain; it reads SSAGVYRMYD…IKQYMPKYNV (79 aa). The UVR domain occupies 203–238; the sequence is QQVISALVDKMELAAERQAYEQAARFRDQIMALRKV.

The protein belongs to the UvrC family. As to quaternary structure, interacts with UvrB in an incision complex.

It localises to the cytoplasm. Functionally, the UvrABC repair system catalyzes the recognition and processing of DNA lesions. UvrC both incises the 5' and 3' sides of the lesion. The N-terminal half is responsible for the 3' incision and the C-terminal half is responsible for the 5' incision. The polypeptide is UvrABC system protein C (Shewanella baltica (strain OS185)).